A 197-amino-acid polypeptide reads, in one-letter code: Ubiquitin-conjugating enzyme E2 T (197 aa).

The region spanning 2-152 (QRASRLKREL…ARQWTEKHAR (151 aa)) is the UBC core domain. The active-site Glycyl thioester intermediate is the Cys86. Residues Lys91 and Lys182 each participate in a glycyl lysine isopeptide (Lys-Gly) (interchain with G-Cter in ubiquitin) cross-link. The interval 149–197 (KHARQKQKADEEEMLDNLPEAGDSRVHNSTQKRKASQLVGIEKKFHPDV) is disordered. Ser184 carries the post-translational modification Phosphoserine. Glycyl lysine isopeptide (Lys-Gly) (interchain with G-Cter in SUMO2) cross-links involve residues Lys191 and Lys192.

The protein belongs to the ubiquitin-conjugating enzyme family. In terms of assembly, directly interacts with FANCL. Interacts with BRCA1. Post-translationally, auto-ubiquitinated. Effects of auto-monoubiquitination at Lys-91 and Lys-182 are unclear: according to a report, monoubiquitination inactivates E2 enzyme activity. In contrast, according to another report, autoubiquitination does not affect E2 enzyme activity.

It is found in the nucleus. The enzyme catalyses S-ubiquitinyl-[E1 ubiquitin-activating enzyme]-L-cysteine + [E2 ubiquitin-conjugating enzyme]-L-cysteine = [E1 ubiquitin-activating enzyme]-L-cysteine + S-ubiquitinyl-[E2 ubiquitin-conjugating enzyme]-L-cysteine.. It functions in the pathway protein modification; protein ubiquitination. Its function is as follows. Accepts ubiquitin from the E1 complex and catalyzes its covalent attachment to other proteins. Catalyzes monoubiquitination. Involved in mitomycin-C (MMC)-induced DNA repair. Acts as a specific E2 ubiquitin-conjugating enzyme for the Fanconi anemia complex by associating with E3 ubiquitin-protein ligase FANCL and catalyzing monoubiquitination of FANCD2, a key step in the DNA damage pathway. Also mediates monoubiquitination of FANCL and FANCI. May contribute to ubiquitination and degradation of BRCA1. In vitro able to promote polyubiquitination using all 7 ubiquitin Lys residues, but may prefer 'Lys-11'-, 'Lys-27'-, 'Lys-48'- and 'Lys-63'-linked polyubiquitination. This is Ubiquitin-conjugating enzyme E2 T (UBE2T) from Homo sapiens (Human).